A 180-amino-acid polypeptide reads, in one-letter code: UPF0227 protein YcfP (180 aa).

It belongs to the UPF0227 family.

This Salmonella agona (strain SL483) protein is UPF0227 protein YcfP.